The following is a 351-amino-acid chain: MLRSILVALCLWLRLALGVRGAPCEAVRIPMCRHMPWNITRMPNHLHHSTQENAILAIEQYEELVDVNCSSVLRFFLCAMYAPICTLEFLHDPIKPCKSVCQRARDDCEPLMKMYNHSWPESLACDELPVYDRGVCISPEAIVTDLPEDVKWIDITPDMMVQERSFDADCKRLSPDRCKCKKVKPTLATYLSKNYSYVIHAKIKAVQRSGCNEVTTVVDVKEIFKSLSPIPRTQVPLITNSSCQCPHILPHQDVLIMCYEWRSRMMLLENCLVEKWRDQLSRRSIQWEERLQEQQRTIQDKKQIASRTSRTSRSNPPKSKGRPPAPKPASPKKNIKARSAPKKSNLKKSAS.

Positions 1 to 18 are cleaved as a signal peptide; sequence MLRSILVALCLWLRLALG. Positions 19-139 constitute an FZ domain; that stretch reads VRGAPCEAVR…VYDRGVCISP (121 aa). Intrachain disulfides connect cysteine 24–cysteine 85, cysteine 32–cysteine 78, cysteine 69–cysteine 108, cysteine 97–cysteine 136, and cysteine 101–cysteine 125. N-linked (GlcNAc...) asparagine glycans are attached at residues asparagine 38 and asparagine 68. Asparagine 116, asparagine 194, and asparagine 240 each carry an N-linked (GlcNAc...) asparagine glycan. One can recognise an NTR domain in the interval 178-306; the sequence is CKCKKVKPTL…TIQDKKQIAS (129 aa). Residues 293 to 303 show a composition bias toward basic and acidic residues; that stretch reads EQQRTIQDKKQ. A disordered region spans residues 293-351; that stretch reads EQQRTIQDKKQIASRTSRTSRSNPPKSKGRPPAPKPASPKKNIKARSAPKKSNLKKSAS. Residues 306–318 show a composition bias toward low complexity; the sequence is SRTSRTSRSNPPK. Residues 333–351 show a composition bias toward basic residues; sequence KNIKARSAPKKSNLKKSAS.

The protein belongs to the secreted frizzled-related protein (sFRP) family. In terms of tissue distribution, expressed in the ovary. Localized to granulosa cells of periovulatory follicles and corpora lutea. Weakly expressed in adult tissues including kidney, brain and lung.

Its subcellular location is the secreted. Its function is as follows. Soluble frizzled-related proteins (sFRPS) function as modulators of Wnt signaling through direct interaction with Wnts. They have a role in regulating cell growth and differentiation in specific cell types. SFRP4 plays a role in bone morphogenesis. May also act as a regulator of adult uterine morphology and function. May also increase apoptosis during ovulation possibly through modulation of FZ1/FZ4/WNT4 signaling. Has phosphaturic effects by specifically inhibiting sodium-dependent phosphate uptake. This Mus musculus (Mouse) protein is Secreted frizzled-related sequence protein 4 (Sfrp4).